Here is a 152-residue protein sequence, read N- to C-terminus: MADEYNAEEAAELKKKRTFRKFSYRGVDLDALLDLTSDELRDVVHARARRKINRGLKRRPMGLIKKLRKAKQEAKPNEKPDLVKTHLRDMIVVPEMIGSVVGIYSGKEFNQVEIKPEMVGHYLGEFSISYKPVKHGRPGIGATHSSRFIPLK.

The protein belongs to the universal ribosomal protein uS19 family.

This is Small ribosomal subunit protein uS19 (RPS15) from Podospora anserina (Pleurage anserina).